We begin with the raw amino-acid sequence, 332 residues long: Glycerol-3-phosphate dehydrogenase [NAD(P)+] (332 aa).

Residues W11, R30, and K108 each contribute to the NADPH site. Residues K108, G137, and S139 each contribute to the sn-glycerol 3-phosphate site. Position 141 (A141) interacts with NADPH. Positions 192, 245, 255, 256, and 257 each coordinate sn-glycerol 3-phosphate. The active-site Proton acceptor is K192. R256 contacts NADPH. V280 and E282 together coordinate NADPH.

The protein belongs to the NAD-dependent glycerol-3-phosphate dehydrogenase family.

The protein resides in the cytoplasm. The enzyme catalyses sn-glycerol 3-phosphate + NAD(+) = dihydroxyacetone phosphate + NADH + H(+). The catalysed reaction is sn-glycerol 3-phosphate + NADP(+) = dihydroxyacetone phosphate + NADPH + H(+). The protein operates within membrane lipid metabolism; glycerophospholipid metabolism. Its function is as follows. Catalyzes the reduction of the glycolytic intermediate dihydroxyacetone phosphate (DHAP) to sn-glycerol 3-phosphate (G3P), the key precursor for phospholipid synthesis. The sequence is that of Glycerol-3-phosphate dehydrogenase [NAD(P)+] from Burkholderia lata (strain ATCC 17760 / DSM 23089 / LMG 22485 / NCIMB 9086 / R18194 / 383).